The sequence spans 155 residues: Endoribonuclease YbeY (155 aa).

Zn(2+)-binding residues include His-114, His-118, and His-124.

This sequence belongs to the endoribonuclease YbeY family. The cofactor is Zn(2+).

It is found in the cytoplasm. Functionally, single strand-specific metallo-endoribonuclease involved in late-stage 70S ribosome quality control and in maturation of the 3' terminus of the 16S rRNA. This chain is Endoribonuclease YbeY, found in Salmonella arizonae (strain ATCC BAA-731 / CDC346-86 / RSK2980).